Here is a 377-residue protein sequence, read N- to C-terminus: tRNA(Met) cytidine acetate ligase (377 aa).

Residues 7 to 20 (ITEYNPFHNGHLFH), Gly-100, Asn-153, and Arg-178 each bind ATP.

This sequence belongs to the TmcAL family.

The protein resides in the cytoplasm. The catalysed reaction is cytidine(34) in elongator tRNA(Met) + acetate + ATP = N(4)-acetylcytidine(34) in elongator tRNA(Met) + AMP + diphosphate. Catalyzes the formation of N(4)-acetylcytidine (ac(4)C) at the wobble position of elongator tRNA(Met), using acetate and ATP as substrates. First activates an acetate ion to form acetyladenylate (Ac-AMP) and then transfers the acetyl group to tRNA to form ac(4)C34. The protein is tRNA(Met) cytidine acetate ligase of Staphylococcus epidermidis (strain ATCC 12228 / FDA PCI 1200).